Reading from the N-terminus, the 243-residue chain is UPF0702 transmembrane protein YkjA (243 aa).

3 helical membrane-spanning segments follow: residues tryptophan 3–phenylalanine 23, methionine 34–leucine 54, and leucine 58–leucine 78.

This sequence belongs to the UPF0702 family.

Its subcellular location is the cell membrane. The chain is UPF0702 transmembrane protein YkjA (ykjA) from Bacillus subtilis (strain 168).